Consider the following 703-residue polypeptide: Hyperosmolality-gated Ca2+ permeable channel 2.3 (703 aa).

At 1 to 3 (MLL) the chain is on the extracellular side. Residues 4–26 (SALLTSVGINLGLCFLFFTLYSI) form a helical membrane-spanning segment. At 27–81 (LRKQPSNVTVYGPRLVKKDGKSQQSNEFNLERLLPTAGWVKRALEPTNDEILSNL) the chain is on the cytoplasmic side. A helical transmembrane segment spans residues 82-115 (GLDALVFIRVFVFSIRVFSFASVVGIFILLPVNY). The Extracellular segment spans residues 116–143 (MGTEFEEFFDLPKKSMDNFSISNVNDGS). A helical transmembrane segment spans residues 144 to 165 (NKLWIHFCAIYIFTAVVCSLLY). Over 166 to 355 (YEHKYILTKR…TASFVRRWIS (190 aa)) the chain is Cytoplasmic. The stretch at 228–300 (RTDKLKVLMN…LKQSLLAGEE (73 aa)) forms a coiled coil. The chain crosses the membrane as a helical span at residues 356–382 (NVVVLVAFVALLILYIVPVVLVQGLAN). At 383–410 (LHQLETWFPFLKGILNMKIVSQVITGYL) the chain is on the extracellular side. Residues 411 to 432 (PSLIFQLFLLIVPPIMLLLSSM) traverse the membrane as a helical segment. Over 433–436 (QGFI) the chain is Cytoplasmic. The chain crosses the membrane as a helical span at residues 437–463 (SHSQIEKSACIKLLIFTVWNSFFANVL). The Extracellular segment spans residues 464–489 (SGSALYRVNVFLEPKTIPRVLAAAVP). A helical membrane pass occupies residues 490–512 (AQASFFVSYVVTSGWTGLSSEIL). Topologically, residues 513–540 (RLVPLLWSFITKLFGKEDDKEFEVPSTP) are cytoplasmic. Residues 541-561 (FCQEIPRILFFGLLGITYFFL) traverse the membrane as a helical segment. Position 562 (S562) is a topological domain, extracellular. A helical membrane pass occupies residues 563 to 586 (PLILPFLLVYYCLGYIIYRNQLLN). Over 587 to 598 (VYAAKYETGGKF) the chain is Cytoplasmic. Residues 599-623 (WPIVHSYTIFSLVLMHIIAVGLFGL) traverse the membrane as a helical segment. Residues 624-626 (KEL) lie on the Extracellular side of the membrane. A helical transmembrane segment spans residues 627 to 655 (PVASSLTIPLPVLTVLFSIYCQRRFLPNF). The Cytoplasmic segment spans residues 656–703 (KSYPTQCLVNKDKADEREQNMSEFYSELVVAYRDPALSASQDSRDISP).

It belongs to the CSC1 (TC 1.A.17) family. Homodimer.

It localises to the membrane. In terms of biological role, acts as an osmosensitive calcium-permeable cation channel. The polypeptide is Hyperosmolality-gated Ca2+ permeable channel 2.3 (Arabidopsis thaliana (Mouse-ear cress)).